The chain runs to 159 residues: MKKPYFVSITLFITIAVLILDQVTKAVIAKSMAIGDSYTVIPKFLYITSHRNNGAAWGILSGRMSFFFIVTIVVLGLLVFFYIKEAKGNFLMQVAISLLFAGALGNFIDRMLHGEVVDFIDTKIFSYDFPIFNGADSSLTIGVILVLIALLFDSRKSKV.

Helical transmembrane passes span 4–24 (PYFVSITLFITIAVLILDQVT), 64–84 (MSFFFIVTIVVLGLLVFFYIK), and 88–108 (GNFLMQVAISLLFAGALGNFI). Catalysis depends on residues Asp118 and Asp136. A helical transmembrane segment spans residues 131-151 (IFNGADSSLTIGVILVLIALL).

It belongs to the peptidase A8 family.

Its subcellular location is the cell membrane. The enzyme catalyses Release of signal peptides from bacterial membrane prolipoproteins. Hydrolyzes -Xaa-Yaa-Zaa-|-(S,diacylglyceryl)Cys-, in which Xaa is hydrophobic (preferably Leu), and Yaa (Ala or Ser) and Zaa (Gly or Ala) have small, neutral side chains.. The protein operates within protein modification; lipoprotein biosynthesis (signal peptide cleavage). Functionally, this protein specifically catalyzes the removal of signal peptides from prolipoproteins. The protein is Lipoprotein signal peptidase of Staphylococcus carnosus (strain TM300).